The primary structure comprises 256 residues: Probable ribosomal RNA small subunit methyltransferase A (256 aa).

Residues His-8, Leu-10, Gly-34, Glu-55, Asp-83, and Asn-98 each coordinate S-adenosyl-L-methionine.

Belongs to the class I-like SAM-binding methyltransferase superfamily. rRNA adenine N(6)-methyltransferase family. RsmA subfamily.

The protein resides in the cytoplasm. Specifically dimethylates two adjacent adenosines in the loop of a conserved hairpin near the 3'-end of 16S rRNA in the 30S particle. May play a critical role in biogenesis of 30S subunits. The protein is Probable ribosomal RNA small subunit methyltransferase A of Methanospirillum hungatei JF-1 (strain ATCC 27890 / DSM 864 / NBRC 100397 / JF-1).